The chain runs to 111 residues: UPF0060 membrane protein Cbei_2176 (111 aa).

4 helical membrane-spanning segments follow: residues 7–27 (ILYFILAGIFEIGGGYLIWIW), 33–53 (SYLYGVIGAVILILYGIIPTL), 60–80 (FGKVYAAYGGIFIVMSILWGW), and 85–105 (IVPDKFDLIGGCIALVGVIVI).

It belongs to the UPF0060 family.

It localises to the cell membrane. The chain is UPF0060 membrane protein Cbei_2176 from Clostridium beijerinckii (strain ATCC 51743 / NCIMB 8052) (Clostridium acetobutylicum).